We begin with the raw amino-acid sequence, 354 residues long: NADH-quinone oxidoreductase subunit H (354 aa).

8 helical membrane passes run 16 to 36 (WLAV…PVMI), 90 to 110 (YLFI…WAVI), 126 to 146 (VLYV…SGWA), 170 to 190 (MGFA…TGIV), 197 to 217 (IWNW…ISGL), 249 to 269 (VFFL…AIMF), 290 to 310 (VPGF…FLWF), and 329 to 349 (VLIP…YFKV).

The protein belongs to the complex I subunit 1 family. As to quaternary structure, NDH-1 is composed of 14 different subunits. Subunits NuoA, H, J, K, L, M, N constitute the membrane sector of the complex.

The protein resides in the cell inner membrane. It carries out the reaction a quinone + NADH + 5 H(+)(in) = a quinol + NAD(+) + 4 H(+)(out). In terms of biological role, NDH-1 shuttles electrons from NADH, via FMN and iron-sulfur (Fe-S) centers, to quinones in the respiratory chain. The immediate electron acceptor for the enzyme in this species is believed to be ubiquinone. Couples the redox reaction to proton translocation (for every two electrons transferred, four hydrogen ions are translocated across the cytoplasmic membrane), and thus conserves the redox energy in a proton gradient. This subunit may bind ubiquinone. This is NADH-quinone oxidoreductase subunit H from Hydrogenovibrio crunogenus (strain DSM 25203 / XCL-2) (Thiomicrospira crunogena).